Reading from the N-terminus, the 168-residue chain is Photosystem I assembly protein Ycf3 (168 aa).

TPR repeat units lie at residues 35–68, 72–105, and 120–153; these read AFTY…EIDP, SYIL…NPFL, and GEQA…TPGN.

The protein belongs to the Ycf3 family.

It localises to the plastid. The protein resides in the chloroplast thylakoid membrane. Its function is as follows. Essential for the assembly of the photosystem I (PSI) complex. May act as a chaperone-like factor to guide the assembly of the PSI subunits. This chain is Photosystem I assembly protein Ycf3, found in Solanum tuberosum (Potato).